We begin with the raw amino-acid sequence, 254 residues long: Ubiquinone biosynthesis O-methyltransferase (254 aa).

The S-adenosyl-L-methionine site is built by R47, G78, D99, and M141.

Belongs to the methyltransferase superfamily. UbiG/COQ3 family.

The catalysed reaction is a 3-demethylubiquinol + S-adenosyl-L-methionine = a ubiquinol + S-adenosyl-L-homocysteine + H(+). The enzyme catalyses a 3-(all-trans-polyprenyl)benzene-1,2-diol + S-adenosyl-L-methionine = a 2-methoxy-6-(all-trans-polyprenyl)phenol + S-adenosyl-L-homocysteine + H(+). The protein operates within cofactor biosynthesis; ubiquinone biosynthesis. O-methyltransferase that catalyzes the 2 O-methylation steps in the ubiquinone biosynthetic pathway. In Rhodopseudomonas palustris (strain BisB18), this protein is Ubiquinone biosynthesis O-methyltransferase.